The chain runs to 378 residues: Beta sliding clamp (378 aa).

The protein belongs to the beta sliding clamp family. As to quaternary structure, forms a ring-shaped head-to-tail homodimer around DNA which binds and tethers DNA polymerases and other proteins to the DNA. The DNA replisome complex has a single clamp-loading complex (3 tau and 1 each of delta, delta', psi and chi subunits) which binds 3 Pol III cores (1 core on the leading strand and 2 on the lagging strand) each with a beta sliding clamp dimer. Additional proteins in the replisome are other copies of gamma, psi and chi, Ssb, DNA helicase and RNA primase.

The protein localises to the cytoplasm. Confers DNA tethering and processivity to DNA polymerases and other proteins. Acts as a clamp, forming a ring around DNA (a reaction catalyzed by the clamp-loading complex) which diffuses in an ATP-independent manner freely and bidirectionally along dsDNA. Initially characterized for its ability to contact the catalytic subunit of DNA polymerase III (Pol III), a complex, multichain enzyme responsible for most of the replicative synthesis in bacteria; Pol III exhibits 3'-5' exonuclease proofreading activity. The beta chain is required for initiation of replication as well as for processivity of DNA replication. In Streptococcus pneumoniae (strain ATCC BAA-255 / R6), this protein is Beta sliding clamp (dnaN).